The sequence spans 140 residues: ATP synthase epsilon chain (140 aa).

This sequence belongs to the ATPase epsilon chain family. F-type ATPases have 2 components, CF(1) - the catalytic core - and CF(0) - the membrane proton channel. CF(1) has five subunits: alpha(3), beta(3), gamma(1), delta(1), epsilon(1). CF(0) has three main subunits: a, b and c.

Its subcellular location is the cell inner membrane. In terms of biological role, produces ATP from ADP in the presence of a proton gradient across the membrane. In Xanthomonas oryzae pv. oryzae (strain PXO99A), this protein is ATP synthase epsilon chain.